A 371-amino-acid polypeptide reads, in one-letter code: tRNA-specific 2-thiouridylase MnmA (371 aa).

Residues 13–20 (GMSGGVDS) and Met-39 contribute to the ATP site. The tract at residues 99-101 (NPD) is interaction with target base in tRNA. Cys-104 functions as the Nucleophile in the catalytic mechanism. Cys-104 and Cys-200 form a disulfide bridge. Gly-128 is a binding site for ATP. The interval 150 to 152 (KDQ) is interaction with tRNA. The Cysteine persulfide intermediate role is filled by Cys-200. Residues 308–309 (RY) are interaction with tRNA.

This sequence belongs to the MnmA/TRMU family.

It is found in the cytoplasm. The catalysed reaction is S-sulfanyl-L-cysteinyl-[protein] + uridine(34) in tRNA + AH2 + ATP = 2-thiouridine(34) in tRNA + L-cysteinyl-[protein] + A + AMP + diphosphate + H(+). Functionally, catalyzes the 2-thiolation of uridine at the wobble position (U34) of tRNA, leading to the formation of s(2)U34. The polypeptide is tRNA-specific 2-thiouridylase MnmA (Listeria welshimeri serovar 6b (strain ATCC 35897 / DSM 20650 / CCUG 15529 / CIP 8149 / NCTC 11857 / SLCC 5334 / V8)).